The primary structure comprises 454 residues: MKVVKFGGSSLASGAQLDKVFHIVTSDPARKAVVVSAPGKHYAEDTKVTDLLIACAEQYLATGSAPELAEAVVERYALIANELQLGQSIIEKIRDDLFTLLEGDKSNPEQYLDAVKASGEDNNAKLIAAYFRYKGVKAEYVNPKDAGLFVTNEPGNAQVLPESYQNLYRLRERDGLIIFPGFFGFSKDGDVITFSRSGSDITGSILANGLQADLYENFTDVDAVYSVNPSFVENPKEISELTYREMRELSYAGFSVFHDEALIPAFRAGIPVQIKNTNNPSAEGTRVVSKRDNTNGPVVGIASDTGFCSIYISKYLMNREIGFGRRALQILEEHGLTYEHVPSGIDDMTIILRQGQMDAATERSVIKRIEEDLHADEVIVEHHLALIMVVGEAMRHNVGTTARAAKALSEAQVNIEMINQGSSEVSMMFGVKEAEERKAVQALYQEFFAGVLIS.

ACT domains are found at residues 312–388 and 389–454; these read ISKY…ALIM and VVGE…VLIS.

Belongs to the aspartokinase family. As to quaternary structure, monomer.

The catalysed reaction is L-aspartate + ATP = 4-phospho-L-aspartate + ADP. It functions in the pathway amino-acid biosynthesis; L-lysine biosynthesis via DAP pathway; (S)-tetrahydrodipicolinate from L-aspartate: step 1/4. Its pathway is amino-acid biosynthesis; L-methionine biosynthesis via de novo pathway; L-homoserine from L-aspartate: step 1/3. The protein operates within amino-acid biosynthesis; L-threonine biosynthesis; L-threonine from L-aspartate: step 1/5. In terms of biological role, catalyzes the phosphorylation of the beta-carboxyl group of aspartic acid with ATP to yield 4-phospho-L-aspartate, which is involved in the branched biosynthetic pathway leading to the biosynthesis of amino acids threonine, isoleucine and methionine. The protein is Aspartokinase 3 (yclM) of Bacillus subtilis (strain 168).